The primary structure comprises 570 residues: Phytoene desaturase (570 aa).

A helical membrane pass occupies residues 547–567 (LFQGFLGALVAILLAYYYLVI).

It belongs to the carotenoid/retinoid oxidoreductase family. NAD(+) serves as cofactor.

Its subcellular location is the membrane. The enzyme catalyses 15-cis-phytoene + A = all-trans-phytofluene + AH2. The catalysed reaction is all-trans-phytofluene + A = all-trans-zeta-carotene + AH2. It catalyses the reaction all-trans-zeta-carotene + A = all-trans-neurosporene + AH2. It carries out the reaction all-trans-neurosporene + A = all-trans-lycopene + AH2. It functions in the pathway carotenoid biosynthesis. Functionally, phytoene desaturase; part of the car gene cluster that mediates the biosynthesis of neurosporaxanthin, a carboxylic apocarotenoid acting as an essential protective pigments and leading to orange pigmentation. Converts phytoene into lycopene via the intermediates phytofluene, zeta-carotene and neurosporene; and further desaturates gamma-carotene into torulene. Neurosporaxanthin is synthesized from geranyl-geranyl pyrophosphate (GGPP) through several enzymatic activities. Phytoene synthase activity performed by the bifunctional enzyme carAR first produces phytoene from geranyl-geranyl pyrophosphate (GGPP). The phytoene dehydrogenase carB then introduces 4 desaturations to lead to lycopene which is substrate of the carotene cyclase activity of carAR that leads to the production of gamma-carotene. CarB then performs a 5th desaturation reaction to yield torulene. Torulene is the substrate of the dioxidase carT that breaks the molecule, removing five carbon atoms to yield beta-apo-4'-carotenal, whereas the aldehyde dehydrogenase carD mediates the last step by converting beta-apo-4'-carotenal into neurosporaxanthin. This chain is Phytoene desaturase, found in Fusarium fujikuroi (Bakanae and foot rot disease fungus).